Reading from the N-terminus, the 62-residue chain is DNA-directed RNA polymerase subunit Rpo10 (62 aa).

The Zn(2+) site is built by Cys6, Cys9, Cys43, and Cys44.

This sequence belongs to the archaeal Rpo10/eukaryotic RPB10 RNA polymerase subunit family. Part of the RNA polymerase complex. Zn(2+) serves as cofactor.

The protein localises to the cytoplasm. It catalyses the reaction RNA(n) + a ribonucleoside 5'-triphosphate = RNA(n+1) + diphosphate. In terms of biological role, DNA-dependent RNA polymerase (RNAP) catalyzes the transcription of DNA into RNA using the four ribonucleoside triphosphates as substrates. This is DNA-directed RNA polymerase subunit Rpo10 from Methanosarcina acetivorans (strain ATCC 35395 / DSM 2834 / JCM 12185 / C2A).